The primary structure comprises 459 residues: Protein YTP1 (459 aa).

Topologically, residues 1 to 6 (MTAANK) are extracellular. Residues 7–27 (NIVFGFSRSISAILLICFFFE) form a helical membrane-spanning segment. At 28–59 (KVCGDMEHDMGMDDTSGYTRPEIVQAGSKSFH) the chain is on the cytoplasmic side. The chain crosses the membrane as a helical span at residues 60–80 (WLCTLGFLLLLPSVVTCLSFA). Over 81–82 (GR) the chain is Extracellular. The helical transmembrane segment at 83 to 103 (IYSATLLQCTCAVYAFLEAAV) threads the bilayer. Topologically, residues 104 to 122 (LRFQDNDGVENRTSRGTAW) are cytoplasmic. Residues 123-143 (FLVGLTWITLFFGGLAGGTGF) form a helical membrane-spanning segment. The Extracellular segment spans residues 144 to 170 (LVKSKRLQTFISNAGEKRLSYIHRGLS). The helical transmembrane segment at 171 to 191 (FLTVLTGWVKVCLAPVALFGF) threads the bilayer. The Cytoplasmic portion of the chain corresponds to 192–205 (CREAHTGQCIAHGI). A helical transmembrane segment spans residues 206-226 (MGSAFVLYGFIYVLVLVIPWI). Residues 227–266 (RSAQTSYSQDYVDSWVMCIWGVVNTFTEHRWGREGWSVHD) lie on the Extracellular side of the membrane. The chain crosses the membrane as a helical span at residues 267–287 (YQHTFMGIIWWTGGILGIFLS). The Cytoplasmic segment spans residues 288–295 (RNGRRTFV). Residues 296 to 316 (PSLIIIFTGWAMSEHAQHLII) form a helical membrane-spanning segment. Residues 317-322 (STKVHN) lie on the Extracellular side of the membrane. The chain crosses the membrane as a helical span at residues 323 to 343 (MFGLVLMCGGALRIIEISFLL). The Cytoplasmic segment spans residues 344 to 351 (RDKRTLDK). A helical transmembrane segment spans residues 352 to 372 (IHSFQYLAPFCLVCSGLLFMG). The Extracellular segment spans residues 373–389 (ANEEQLILVLRLGGDHS). The chain crosses the membrane as a helical span at residues 390-410 (AYVLIIVSGAFLVYFWMIACL). Residues 411 to 459 (EFYLYLLEKGKQGFLPKSYELEEENNNVSFELDNISNEDVDEDTTPFNV) are Cytoplasmic-facing.

The protein localises to the membrane. The protein is Protein YTP1 (YTP1) of Saccharomyces cerevisiae (strain ATCC 204508 / S288c) (Baker's yeast).